Reading from the N-terminus, the 1935-residue chain is Myosin-7 (1935 aa).

Residues 32–81 (DLKKDVFVPDDKEEFVKATILSREGGKVTAETEHGKTVTVKEDQVLQQNP) enclose the Myosin N-terminal SH3-like domain. Residues 85 to 778 (DKIEDMAMLT…LLGLLEEMRD (694 aa)) enclose the Myosin motor domain. Lys129 carries the post-translational modification N6,N6,N6-trimethyllysine. 178–185 (GESGAGKT) lines the ATP pocket. Phosphothreonine is present on Thr378. Actin-binding stretches follow at residues 655–677 (LNKL…IPNE) and 757–771 (KFGH…GLLG). The region spanning 781-810 (LSRIITRIQAQSRGVLSRMEFKKLLERRDS) is the IQ domain. Positions 839–1935 (LLKSAETEKE…DIGTKGLNEE (1097 aa)) form a coiled coil. 2 positions are modified to phosphoserine: Ser1137 and Ser1269. A Phosphothreonine modification is found at Thr1282. A Phosphotyrosine modification is found at Tyr1308. Thr1309 bears the Phosphothreonine mark. The residue at position 1510 (Ser1510) is a Phosphoserine. Thr1513 is subject to Phosphothreonine. The segment at 1907 to 1935 (EERADIAESQVNKLRAKSRDIGTKGLNEE) is disordered. Residues 1923 to 1935 (KSRDIGTKGLNEE) show a composition bias toward basic and acidic residues.

This sequence belongs to the TRAFAC class myosin-kinesin ATPase superfamily. Myosin family. Muscle myosin is a hexameric protein that consists of 2 heavy chain subunits (MHC), 2 alkali light chain subunits (MLC) and 2 regulatory light chain subunits (MLC-2). Interacts with ECPAS. Interacts (via C-terminus) with LRRC39.

Its subcellular location is the cytoplasm. It is found in the myofibril. The protein localises to the sarcomere. In terms of biological role, myosins are actin-based motor molecules with ATPase activity essential for muscle contraction. Forms regular bipolar thick filaments that, together with actin thin filaments, constitute the fundamental contractile unit of skeletal and cardiac muscle. The polypeptide is Myosin-7 (MYH7) (Bos taurus (Bovine)).